A 150-amino-acid polypeptide reads, in one-letter code: Snake venom vascular endothelial growth factor toxin barietin (150 aa).

An N-terminal signal peptide occupies residues 1–24; sequence MAAYLLAVAILFCIQGWPSGTVQG. E25 is subject to Pyrrolidone carboxylic acid (Glu). Disulfide bonds link C38-C80, C69-C115, and C73-C117. The tract at residues 119-150 is disordered; it reads PRSGSRVNIGKHKRSPEEGEREPSSPLTPGSL. A propeptide spanning residues 122 to 150 is cleaved from the precursor; that stretch reads GSRVNIGKHKRSPEEGEREPSSPLTPGSL.

It belongs to the PDGF/VEGF growth factor family. Snake venom VEGF subfamily. Homodimer; disulfide-linked. Interacts with high affinity with VEGF receptor-2 (KDR), and with a lower affinity with VEGF receptor-1 (FLT1). Does not bind VEGF receptor-3 (FLT4) and neuropilin-1 (NRP1). As to expression, expressed by the venom gland.

Its subcellular location is the secreted. Its function is as follows. Snake venom VEGFs that may contribute to venom dispersion and prey subjugation by inducing vascular permeability and hypotension. This protein induces an increase in capillary permeability after intradermal injection, as well as a drastic hypotensive effect after intravenous injection. The hypotension is mediated by nitric oxide (NO), which is produced by VEGF-activated endothelium NO synthase. Also induces angiogenesis in vitro, probably through VEGF receptor (KDR/VEGFR-2) signaling. The chain is Snake venom vascular endothelial growth factor toxin barietin from Bitis arietans (African puff adder).